The primary structure comprises 237 residues: Protein XpsM (237 aa).

Positions 1–21 (MPAATWTASPSPPNWPVPMPR) are disordered. Pro residues predominate over residues 10–21 (PSPPNWPVPMPR).

This Xanthomonas campestris pv. campestris (strain ATCC 33913 / DSM 3586 / NCPPB 528 / LMG 568 / P 25) protein is Protein XpsM (xpsM).